We begin with the raw amino-acid sequence, 214 residues long: S-crystallin 1 (214 aa).

Residues 2-79 (PSYTLHYFNH…YLAREFGFHG (78 aa)) form the GST N-terminal domain. The region spanning 81–214 (NNMEMARVDF…YLQRRCRTDF (134 aa)) is the GST C-terminal domain.

Belongs to the GST superfamily. In terms of tissue distribution, lens.

Functionally, S-crystallins are structural components of squids and octopi eye lens. Contains relatively little GST activity (1/1000 of that of mammalian GST enzyme). The polypeptide is S-crystallin 1 (OCTS1) (Octopus vulgaris (Common octopus)).